A 213-amino-acid polypeptide reads, in one-letter code: Riboflavin synthase (213 aa).

Lumazine-binding repeat units lie at residues 1 to 97 and 98 to 195; these read MFTG…IGGH and LMSG…VDTV. Residues 4–6, 48–50, 62–67, 101–103, lysine 137, 146–148, and 160–165 contribute to the 2,4-dihydroxypteridine site; these read GIV, CLT, DLMKET, GHI, SLT, and HLIPET.

In terms of assembly, homotrimer. Unlike in B.subtilis, does not interact with 6,7-dimethyl-8-ribityllumazine synthase.

It catalyses the reaction 2 6,7-dimethyl-8-(1-D-ribityl)lumazine + H(+) = 5-amino-6-(D-ribitylamino)uracil + riboflavin. It functions in the pathway cofactor biosynthesis; riboflavin biosynthesis; riboflavin from 2-hydroxy-3-oxobutyl phosphate and 5-amino-6-(D-ribitylamino)uracil: step 2/2. Catalyzes the dismutation of two molecules of 6,7-dimethyl-8-ribityllumazine, resulting in the formation of riboflavin and 5-amino-6-(D-ribitylamino)uracil. The sequence is that of Riboflavin synthase (ribC) from Escherichia coli (strain K12).